A 30-amino-acid chain; its full sequence is U10-ctenitoxin-Co1b (30 aa).

2 disulfide bridges follow: Cys2/Cys17 and Cys9/Cys22.

As to expression, expressed by the venom gland.

The protein resides in the secreted. In terms of biological role, antagonist of L-type calcium channels (Cav1/CACNA1). This is U10-ctenitoxin-Co1b from Ctenus ornatus (Brazilian spider).